Reading from the N-terminus, the 930-residue chain is MLKLLLGDPNARKLKKYQPYITEINLLEEDIKVLSDEDLKGKTAEFKQRLAKGETLDDILPEAFAVVREAGRRVLGLRHFDVQMLGGVILHSGQIAEMKTGEGKTLVATLPSYLNALTGKGVHVITVNDYLARRDAEWMGQVHRFLGLSVGLIQSSMTPSERQKNYECDITYVTNSEVGFDYLRDNMATSMADVVQRPFNYCVIDEVDSILVDEARTPLIISGQVERPTEKYVQAAEIALTLQKDEHYDVDEKARNVLLTDEGFAQAEELLGVTDLFDPEDPWAHFVFNAIKAKELFLKDVNYIVRNGEVVIVDEFTGRVLPGRRWSDGLHQAIEAKEHVDIQPETQTLATITYQNLFLLYPKLGGMTGTAKTEEAEFERIYKLEVTIIPTNRIRRREDLSDLVFKKEIGKWQAIARECAEMHELGRPVLVGTTSVEKSEYLSQLLREQGIPHELLNARPENVEREAEIVAQAGRRGAVTIATNMAGRGTDIILGGNSEYMARLKLREYFMPRIVRPDDEDVFGVQRAAGLPTGHGAGQGFVPGKKVKTWKASPEIFPTQLSKEAEQLLKEAVDFAVREYGDRSLPELEAEDKVAVAAEKAPTDDSVIQKLRDAYNRIKHEYEEFTSTEHDEVVGRGGLHVIGTERHESRRIDNQLRGRAGRQGDPGSTRFFLSLEDNLLRIFGGDRVAGLMEAFNVEDDMPIESGMLTRSLEGAQRKVETYYYDIRKQVFEYDEVMNNQRRAIYAERRRVLEGQDLKEQVIKYAEKTMDEIVDYYINVDLPSEEWELDKLVDKVKEFVYLLSDMQANQLEDMGVSEIKAFLHEQVRIAYDLKEAQIDQIQPGLMRQAERFFILQRIDTLWREHLQQMDALRESVGLRGYGQKDPLIEYKSEGYELFLDMMVNIRRDVVYSLFMFQPQPQPVVQTSSEMV.

ATP is bound by residues glutamine 83, 101–105 (GEGKT), and aspartate 491.

The protein belongs to the SecA family. As to quaternary structure, monomer and homodimer. Part of the essential Sec protein translocation apparatus which comprises SecA, SecYEG and auxiliary proteins SecDF. Other proteins may also be involved.

It localises to the cell inner membrane. It is found in the cellular thylakoid membrane. Its subcellular location is the cytoplasm. The catalysed reaction is ATP + H2O + cellular proteinSide 1 = ADP + phosphate + cellular proteinSide 2.. In terms of biological role, part of the Sec protein translocase complex. Interacts with the SecYEG preprotein conducting channel. Has a central role in coupling the hydrolysis of ATP to the transfer of proteins into and across the cell membrane, serving as an ATP-driven molecular motor driving the stepwise translocation of polypeptide chains across the membrane. Probably participates in protein translocation into and across both the cytoplasmic and thylakoid membranes in cyanobacterial cells. The sequence is that of Protein translocase subunit SecA from Nostoc sp. (strain PCC 7120 / SAG 25.82 / UTEX 2576).